The primary structure comprises 156 residues: Transcriptional repressor NrdR (156 aa).

A zinc finger lies at 3–34; the sequence is CPFCQHGHSRVIDSRVIEAGSAIRRRRECSQC. The ATP-cone domain occupies 46 to 136; the sequence is LLVLKRNGVT…VYKSFESADD (91 aa).

The protein belongs to the NrdR family. Zn(2+) is required as a cofactor.

In terms of biological role, negatively regulates transcription of bacterial ribonucleotide reductase nrd genes and operons by binding to NrdR-boxes. The sequence is that of Transcriptional repressor NrdR from Corynebacterium efficiens (strain DSM 44549 / YS-314 / AJ 12310 / JCM 11189 / NBRC 100395).